The following is a 1123-amino-acid chain: MSLLSIDDIFIPTSDLLNHSHNNKRLNYNQAKQTLLLNMNGSYPSSNNPISNGEPCDAKSNHLGGEMHNGVGSKLENGILKKAPDIPHITNNIIPLSNVLKFYTQEAYKQLTTAIENLSSTKDTENDSSRKKFFLNLIISLRQDFIKIYTLVKWASSSKDISKLIDLLNWFRSQDFYFEQLGYGLNELNRYSGAKLPNSDIITSLEVFIKKRPQLPSYNLISTPPISSEKTLEVLKDLNLTLMTRMALINNLPKRFINNYEIRDGRVYFTIQNEFQVSVTVGNDLIIEQEDDYYKSPFYFIDFKFLFGINPETALITHKDNKIITKLPKSSFQNLEKIVNTVLLNSGLGGLYDLLHKYSISFKLYLIARQLKDISINSKWRNNIQFKYQNGKSLILINYWSSHYLSRNWKSFIELGIDKNYNLNFRWFKNGTYELNHGISGIFDRNNIKKQSDASDEQQNNIEPNEESLEDLREDNNEDESEPQDLSVDLILNIIVNKHSEMLMDKIYETIVKRLSDQEEYCSFISCHQLLLKLTPNKSVVFAINPLTGFFYFIDPSPIQNQVTKKINTQSSNHKNKPFFSENDMVENIVNQLIQLKLEMFNKEINNKLITSGWINNEIIKLNDYETIKLSNFLNGDNFNNSNYNKIQFYRCKNWPLSWFLSNLVSGDNFRTFWWVARIKSIKGEWKIQWVQQLKFDQEMETSDELTLDYKFFNNLSSLCSNMIIDHMILEELQTKKIQYIQKQSKEKAAELLNKFQIDEVKEENIKPEETNNPFVYESIIMLYNDNRLLPVSNSSTSLFLKIKLITLNNSTQMKLKLFGNLRNIPNTLAETFNQLNLHISKSQNYFEINDIVNLSNKINDSSIKETRLLDSILLKLNVLNELIKVLYQLDQNNIEIVNSSIDSIQIKIDEESNNLTIKLPEMDEKFSLLSSNTESNEMKLIISYLNKYLSMTSKVQENEIIGIIKYFKEITPIVKTIKSVRATLDEKNKMKLSNGLSKLNFDVEFQNLNLIQFVYFLNHTNVNSNKKILKDKIVIKLNFMRNRFNKQDRLLLKLSMKDNLNSRNLKYKKLFELIYKGISEVDTTNGSKITKLNYDFIVDSSLINELMIKITDAFILFLSDNA.

The tract at residues 450–484 is disordered; it reads KQSDASDEQQNNIEPNEESLEDLREDNNEDESEPQ.

This sequence belongs to the Mediator complex subunit 14 family. As to quaternary structure, component of the Mediator complex.

It localises to the nucleus. Component of the Mediator complex, a coactivator involved in the regulated transcription of nearly all RNA polymerase II-dependent genes. Mediator functions as a bridge to convey information from gene-specific regulatory proteins to the basal RNA polymerase II transcription machinery. Mediator is recruited to promoters by direct interactions with regulatory proteins and serves as a scaffold for the assembly of a functional preinitiation complex with RNA polymerase II and the general transcription factors. This Debaryomyces hansenii (strain ATCC 36239 / CBS 767 / BCRC 21394 / JCM 1990 / NBRC 0083 / IGC 2968) (Yeast) protein is Mediator of RNA polymerase II transcription subunit 14 (RGR1).